Consider the following 174-residue polypeptide: Adipose-secreted signaling protein (174 aa).

Alanine 2 carries the N-acetylalanine modification. Position 147 is a phosphothreonine (threonine 147).

The protein belongs to the ADISSP family.

It is found in the secreted. Adipocyte-secreted protein (adipokine) that acts as a key regulator for white adipose tissue (WAT) thermogenesis and glucose homeostasis at least in part through activation of protein kinase A (PKA). This chain is Adipose-secreted signaling protein, found in Rattus norvegicus (Rat).